Consider the following 229-residue polypeptide: ATP-dependent dethiobiotin synthetase BioD (229 aa).

Residue 15–20 (EIGKTL) participates in ATP binding. T19 lines the Mg(2+) pocket. The active site involves K40. Residues D57, 118-121 (EGVG), and 207-209 (PRL) each bind ATP. Mg(2+) is bound by residues D57 and E118.

The protein belongs to the dethiobiotin synthetase family. In terms of assembly, homodimer. Mg(2+) serves as cofactor.

Its subcellular location is the cytoplasm. The enzyme catalyses (7R,8S)-7,8-diammoniononanoate + CO2 + ATP = (4R,5S)-dethiobiotin + ADP + phosphate + 3 H(+). It participates in cofactor biosynthesis; biotin biosynthesis; biotin from 7,8-diaminononanoate: step 1/2. Catalyzes a mechanistically unusual reaction, the ATP-dependent insertion of CO2 between the N7 and N8 nitrogen atoms of 7,8-diaminopelargonic acid (DAPA, also called 7,8-diammoniononanoate) to form a ureido ring. The protein is ATP-dependent dethiobiotin synthetase BioD of Ralstonia nicotianae (strain ATCC BAA-1114 / GMI1000) (Ralstonia solanacearum).